We begin with the raw amino-acid sequence, 336 residues long: Galactose/methyl galactoside import permease protein MglC (336 aa).

Transmembrane regions (helical) follow at residues 17 to 37, 53 to 73, 107 to 127, 128 to 148, 181 to 201, 227 to 247, 257 to 277, 279 to 299, and 306 to 326; these read GIYV…PTFL, IIIA…LSAG, LVIL…GIII, AYLN…VYGI, FRLS…WVLW, VALN…FGGL, TNNL…VGGV, FSGG…FTVI, and IGVN…FAVA.

This sequence belongs to the binding-protein-dependent transport system permease family. AraH/RbsC subfamily. As to quaternary structure, the complex is composed of one ATP-binding protein (MglA), two transmembrane proteins (MglC) and a solute-binding protein (MglB).

The protein localises to the cell inner membrane. In terms of biological role, part of the ABC transporter complex MglABC involved in galactose/methyl galactoside import. Probably responsible for the translocation of the substrate across the membrane. The chain is Galactose/methyl galactoside import permease protein MglC (mglC) from Salmonella typhimurium (strain LT2 / SGSC1412 / ATCC 700720).